We begin with the raw amino-acid sequence, 743 residues long: Putative cation exchanger C3A12.06c (743 aa).

Helical transmembrane passes span 13–33 (LILL…HRIS), 109–129 (FPVL…IGIS), 138–158 (LVTI…TFLA), 182–202 (IGEL…SVCL), 213–233 (FLRD…FVLH), 239–258 (IWQS…FVFF), 528–548 (LRLL…ITGG), 551–571 (LYIY…LYYY), 580–600 (FLPW…STIA), 609–629 (ALGV…FAAG), 649–669 (MAMG…IGIS), 690–710 (LSIT…YVPL), and 718–738 (VLGL…IVVE).

Belongs to the Ca(2+):cation antiporter (CaCA) (TC 2.A.19) family.

The protein localises to the endoplasmic reticulum membrane. Functionally, putative cation exchanger. The polypeptide is Putative cation exchanger C3A12.06c (Schizosaccharomyces pombe (strain 972 / ATCC 24843) (Fission yeast)).